A 742-amino-acid polypeptide reads, in one-letter code: Phosphoribosylformylglycinamidine synthase subunit PurL (742 aa).

Residue His54 is part of the active site. ATP contacts are provided by Tyr57 and Lys96. A Mg(2+)-binding site is contributed by Glu98. Residues 99–102 and Arg121 each bind substrate; that span reads SHNH. His100 (proton acceptor) is an active-site residue. Residue Asp122 participates in Mg(2+) binding. Gln245 serves as a coordination point for substrate. Asp273 lines the Mg(2+) pocket. 317–319 is a binding site for substrate; sequence ESQ. Residues Asp500 and Gly537 each coordinate ATP. Asn538 is a binding site for Mg(2+). Substrate is bound at residue Ser540.

The protein belongs to the FGAMS family. In terms of assembly, monomer. Part of the FGAM synthase complex composed of 1 PurL, 1 PurQ and 2 PurS subunits.

It localises to the cytoplasm. The enzyme catalyses N(2)-formyl-N(1)-(5-phospho-beta-D-ribosyl)glycinamide + L-glutamine + ATP + H2O = 2-formamido-N(1)-(5-O-phospho-beta-D-ribosyl)acetamidine + L-glutamate + ADP + phosphate + H(+). It participates in purine metabolism; IMP biosynthesis via de novo pathway; 5-amino-1-(5-phospho-D-ribosyl)imidazole from N(2)-formyl-N(1)-(5-phospho-D-ribosyl)glycinamide: step 1/2. Its function is as follows. Part of the phosphoribosylformylglycinamidine synthase complex involved in the purines biosynthetic pathway. Catalyzes the ATP-dependent conversion of formylglycinamide ribonucleotide (FGAR) and glutamine to yield formylglycinamidine ribonucleotide (FGAM) and glutamate. The FGAM synthase complex is composed of three subunits. PurQ produces an ammonia molecule by converting glutamine to glutamate. PurL transfers the ammonia molecule to FGAR to form FGAM in an ATP-dependent manner. PurS interacts with PurQ and PurL and is thought to assist in the transfer of the ammonia molecule from PurQ to PurL. This is Phosphoribosylformylglycinamidine synthase subunit PurL from Geobacillus sp. (strain WCH70).